A 557-amino-acid chain; its full sequence is Aspartate--tRNA ligase (557 aa).

Glutamate 168 provides a ligand contact to L-aspartate. An aspartate region spans residues glutamine 192 to lysine 195. Arginine 214 is an L-aspartate binding site. ATP contacts are provided by residues arginine 214–glutamate 216 and glutamine 223. An L-aspartate-binding site is contributed by histidine 423. An ATP-binding site is contributed by glutamate 457. Arginine 464 lines the L-aspartate pocket. Residue glycine 505 to arginine 508 participates in ATP binding.

Belongs to the class-II aminoacyl-tRNA synthetase family. Type 1 subfamily. As to quaternary structure, homodimer.

Its subcellular location is the cytoplasm. The enzyme catalyses tRNA(Asp) + L-aspartate + ATP = L-aspartyl-tRNA(Asp) + AMP + diphosphate. Its function is as follows. Catalyzes the attachment of L-aspartate to tRNA(Asp) in a two-step reaction: L-aspartate is first activated by ATP to form Asp-AMP and then transferred to the acceptor end of tRNA(Asp). This chain is Aspartate--tRNA ligase, found in Mycoplasma pneumoniae (strain ATCC 29342 / M129 / Subtype 1) (Mycoplasmoides pneumoniae).